The sequence spans 530 residues: S-adenosylhomocysteine hydrolase-like protein 1 (530 aa).

M1 carries the N-acetylmethionine modification. Position 2 is an N-acetylserine (S2). Residue S2 is modified to Phosphoserine. At K40 the chain carries N6-acetyllysine. Residues 53-103 are disordered; sequence KFPTKTGRRSLSRSISQSSTDSYSSAASYTDSSDDEVSPREKQQTNSKGSS. Low complexity predominate over residues 64 to 83; the sequence is SRSISQSSTDSYSSAASYTD. The tract at residues 65-92 is PEST; the sequence is RSISQSSTDSYSSAASYTDSSDDEVSPR. Residues S68, S71, S74, S77, and S84 each carry the phosphoserine modification. Residues 138–201 are interaction with BCL2L10; the sequence is QGEKPLAGAK…EAGVAVFAWK (64 aa). The substrate site is built by T155, D229, E254, K284, and D288. Residues 281-448 are NAD binding; sequence SVTKQKFDNL…EGRLLNLSCS (168 aa). NAD(+)-binding positions include 318–322, E341, and N376; that span reads GYGEV. S391 is subject to Phosphoserine. 397-399 provides a ligand contact to NAD(+); that stretch reads MGH. Residues 520 to 530 form a PDZ-binding region; the sequence is NGPFKPNYYRY.

The protein belongs to the adenosylhomocysteinase family. As to quaternary structure, forms multimers. Forms heteromultimers with AHCYL2 (via the C-terminal region). Interacts (when phosphorylated) with ITPR1 (when not phosphorylated); the interaction suppresses inositol 1,4,5-trisphosphate binding to ITPR1. Interacts with BCL2L10; this strengthens the interaction of AHCYL1 with ITPR1. Interacts with CFTR and SLC26A6; the interactions take place once AHCYL1 is released from ITPR1 and increase CFTR and SLC26A6 activities. Interacts with RRM1; in a phosphorylation- and (dATP)-dependent manner. Interacts (via PEST domain when phosphorylated) with SLC4A4 isoform 1 but not isoform 2; the interaction increases SLC4A4 isoform 1 activity. Interacts (when phosphorylated) with SLC9A3; the interaction is required for SLC9A3 apical location and activity. Interacts (when phosphorylated) with FIP1L1; the interaction is direct and associates AHCYL1 with the CPSF complex and RNA. Interacts with PAPOLA. Interacts with ZCCHC4. Interacts with AHCY. Requires NAD(+) as cofactor. Post-translationally, phosphorylated at Ser/Thr residues between Ser-68 and Thr-72 in the PEST region: required for interaction with dATP-bound RRM1 and ITPR1. Phosphorylation at Ser-68 by PRKD1 and CAMK4 is required for further phosphorylations by CSNK1A1. Phosphorylation is induced by oxidative stress. Probably phosphorylated by CAMK2A; phosphorylation at Ser-68 may be required for interaction with SLC9A3. Dephosphorylated in response to apoptotic stress conditions which causes translocation of both AHCYL1 and BCL2L10 from mitochondria-associated endoplasmic reticulum membranes and promotes apoptosis. Expressed in dendritic cells.

It localises to the endoplasmic reticulum. The protein resides in the cytoplasm. It is found in the cytosol. The protein localises to the apical cell membrane. Its subcellular location is the microsome. Functionally, multifaceted cellular regulator which coordinates several essential cellular functions including regulation of epithelial HCO3(-) and fluid secretion, mRNA processing and DNA replication. Regulates ITPR1 sensitivity to inositol 1,4,5-trisphosphate, competing for the common binding site and acting as endogenous 'pseudoligand' whose inhibitory activity can be modulated by its phosphorylation status. Promotes the formation of contact points between the endoplasmic reticulum (ER) and mitochondria, facilitating transfer of Ca(2+) from the ER to mitochondria. Under normal cellular conditions, functions cooperatively with BCL2L10 to limit ITPR1-mediated Ca(2+) release but, under apoptotic stress conditions, dephosphorylated which promotes dissociation of both AHCYL1 and BCL2L10 from mitochondria-associated endoplasmic reticulum membranes, inhibits BCL2L10 interaction with ITPR1 and leads to increased Ca(2+) transfer to mitochondria which promotes apoptosis. In the pancreatic and salivary ducts, at resting state, attenuates inositol 1,4,5-trisphosphate-induced calcium release by interacting with ITPR1. When extracellular stimuli induce ITPR1 phosphorylation or inositol 1,4,5-trisphosphate production, dissociates from ITPR1 to interact with CFTR and SLC26A6, mediating their synergistic activation by calcium and cAMP that stimulates the epithelial secretion of electrolytes and fluid. Also activates basolateral SLC4A4 isoform 1 to coordinate fluid and HCO3(-) secretion. Inhibits the effect of STK39 on SLC4A4 and CFTR by recruiting PP1 phosphatase which activates SLC4A4, SLC26A6 and CFTR through dephosphorylation. Mediates the induction of SLC9A3 surface expression produced by Angiotensin-2. Depending on the cell type, activates SLC9A3 in response to calcium or reverses SLC9A3R2-dependent calcium inhibition. May modulate the polyadenylation state of specific mRNAs, both by controlling the subcellular location of FIP1L1 and by inhibiting PAPOLA activity, in response to a stimulus that alters its phosphorylation state. Acts as a (dATP)-dependent inhibitor of ribonucleotide reductase large subunit RRM1, controlling the endogenous dNTP pool and ensuring normal cell cycle progression. In vitro does not exhibit any S-adenosyl-L-homocysteine hydrolase activity. The protein is S-adenosylhomocysteine hydrolase-like protein 1 of Homo sapiens (Human).